A 453-amino-acid polypeptide reads, in one-letter code: Tryptophan biosynthesis protein TrpCF (453 aa).

The segment at 1–257 (MMQTVLAKIV…AAVRRVLLGE (257 aa)) is indole-3-glycerol phosphate synthase. Residues 258-453 (NKVCGLTRGQ…ASVFQTLRAY (196 aa)) form an N-(5'-phosphoribosyl)anthranilate isomerase region.

It in the N-terminal section; belongs to the TrpC family. This sequence in the C-terminal section; belongs to the TrpF family. As to quaternary structure, monomer.

It carries out the reaction N-(5-phospho-beta-D-ribosyl)anthranilate = 1-(2-carboxyphenylamino)-1-deoxy-D-ribulose 5-phosphate. It catalyses the reaction 1-(2-carboxyphenylamino)-1-deoxy-D-ribulose 5-phosphate + H(+) = (1S,2R)-1-C-(indol-3-yl)glycerol 3-phosphate + CO2 + H2O. It participates in amino-acid biosynthesis; L-tryptophan biosynthesis; L-tryptophan from chorismate: step 3/5. Its pathway is amino-acid biosynthesis; L-tryptophan biosynthesis; L-tryptophan from chorismate: step 4/5. Bifunctional enzyme that catalyzes two sequential steps of tryptophan biosynthetic pathway. The first reaction is catalyzed by the isomerase, coded by the TrpF domain; the second reaction is catalyzed by the synthase, coded by the TrpC domain. This Escherichia coli (strain K12) protein is Tryptophan biosynthesis protein TrpCF (trpC).